The sequence spans 299 residues: Tyrosine recombinase XerC (299 aa).

The Core-binding (CB) domain occupies methionine 1–asparagine 85. The Tyr recombinase domain occupies arginine 106–aspartate 285. Catalysis depends on residues arginine 146, lysine 170, histidine 237, arginine 240, and histidine 263. Residue tyrosine 272 is the O-(3'-phospho-DNA)-tyrosine intermediate of the active site.

Belongs to the 'phage' integrase family. XerC subfamily. In terms of assembly, forms a cyclic heterotetrameric complex composed of two molecules of XerC and two molecules of XerD.

It localises to the cytoplasm. Its function is as follows. Site-specific tyrosine recombinase, which acts by catalyzing the cutting and rejoining of the recombining DNA molecules. The XerC-XerD complex is essential to convert dimers of the bacterial chromosome into monomers to permit their segregation at cell division. It also contributes to the segregational stability of plasmids. The protein is Tyrosine recombinase XerC of Pseudomonas putida (strain W619).